The chain runs to 334 residues: N-acetyl-gamma-glutamyl-phosphate reductase (334 aa).

Residue C154 is part of the active site.

Belongs to the NAGSA dehydrogenase family. Type 1 subfamily.

The protein resides in the cytoplasm. It catalyses the reaction N-acetyl-L-glutamate 5-semialdehyde + phosphate + NADP(+) = N-acetyl-L-glutamyl 5-phosphate + NADPH + H(+). Its pathway is amino-acid biosynthesis; L-arginine biosynthesis; N(2)-acetyl-L-ornithine from L-glutamate: step 3/4. Catalyzes the NADPH-dependent reduction of N-acetyl-5-glutamyl phosphate to yield N-acetyl-L-glutamate 5-semialdehyde. The protein is N-acetyl-gamma-glutamyl-phosphate reductase of Buchnera aphidicola subsp. Acyrthosiphon pisum (strain 5A).